A 90-amino-acid chain; its full sequence is Small ribosomal subunit protein uS15c (90 aa).

This sequence belongs to the universal ribosomal protein uS15 family. As to quaternary structure, part of the 30S ribosomal subunit.

The protein resides in the plastid. The protein localises to the chloroplast. This is Small ribosomal subunit protein uS15c (rps15) from Phaseolus vulgaris (Kidney bean).